The primary structure comprises 269 residues: Hydroxyethylthiazole kinase (269 aa).

Substrate is bound at residue Met42. Residues Arg118 and Ser164 each coordinate ATP. Gly191 provides a ligand contact to substrate.

Belongs to the Thz kinase family. Requires Mg(2+) as cofactor.

It carries out the reaction 5-(2-hydroxyethyl)-4-methylthiazole + ATP = 4-methyl-5-(2-phosphooxyethyl)-thiazole + ADP + H(+). It participates in cofactor biosynthesis; thiamine diphosphate biosynthesis; 4-methyl-5-(2-phosphoethyl)-thiazole from 5-(2-hydroxyethyl)-4-methylthiazole: step 1/1. Catalyzes the phosphorylation of the hydroxyl group of 4-methyl-5-beta-hydroxyethylthiazole (THZ). This Listeria monocytogenes serovar 1/2a (strain ATCC BAA-679 / EGD-e) protein is Hydroxyethylthiazole kinase.